A 308-amino-acid polypeptide reads, in one-letter code: MNHLTGLFGLPASTLVELLDLATGYREGLNREPETFAPLLSNRRIALVFFENSTRTRFSFELAARHLGAGTLSFTAASSSVSKGETLSDTIRNLEAMKVDAFVLRHPSSGAAEFVASITKRPVINAGDGTHEHPTQALLDLLTLREYFGKIEGLKIMILGDILHSRVARSNIIGLKTLGAEIAVCAPTTLLPGRIDQLGVRVFTGIDEALAWADAAIVLRLQLERATGGYIPSLEEYSASYGLTDEKLDRLKRLMPVLHPGPINREIEISNLVADRIQPPGYSSSMLMEQVTNGVAVRMAVLHRLLAK.

Residues arginine 55 and threonine 56 each coordinate carbamoyl phosphate. Lysine 83 lines the L-aspartate pocket. Carbamoyl phosphate contacts are provided by arginine 105, histidine 133, and glutamine 136. Arginine 166 and arginine 220 together coordinate L-aspartate. 2 residues coordinate carbamoyl phosphate: glycine 261 and proline 262.

This sequence belongs to the aspartate/ornithine carbamoyltransferase superfamily. ATCase family. As to quaternary structure, heterododecamer (2C3:3R2) of six catalytic PyrB chains organized as two trimers (C3), and six regulatory PyrI chains organized as three dimers (R2).

It carries out the reaction carbamoyl phosphate + L-aspartate = N-carbamoyl-L-aspartate + phosphate + H(+). It participates in pyrimidine metabolism; UMP biosynthesis via de novo pathway; (S)-dihydroorotate from bicarbonate: step 2/3. In terms of biological role, catalyzes the condensation of carbamoyl phosphate and aspartate to form carbamoyl aspartate and inorganic phosphate, the committed step in the de novo pyrimidine nucleotide biosynthesis pathway. This chain is Aspartate carbamoyltransferase catalytic subunit, found in Chlorobaculum tepidum (strain ATCC 49652 / DSM 12025 / NBRC 103806 / TLS) (Chlorobium tepidum).